A 272-amino-acid polypeptide reads, in one-letter code: Orotidine 5'-phosphate decarboxylase (272 aa).

Residue Lys-93 is the Proton donor of the active site.

This sequence belongs to the OMP decarboxylase family. Type 2 subfamily.

It catalyses the reaction orotidine 5'-phosphate + H(+) = UMP + CO2. It functions in the pathway pyrimidine metabolism; UMP biosynthesis via de novo pathway; UMP from orotate: step 2/2. The chain is Orotidine 5'-phosphate decarboxylase from Roseiflexus sp. (strain RS-1).